Here is a 213-residue protein sequence, read N- to C-terminus: Orotate phosphoribosyltransferase (213 aa).

Lys-26 contacts 5-phospho-alpha-D-ribose 1-diphosphate. 34 to 35 (FF) is a binding site for orotate. 5-phospho-alpha-D-ribose 1-diphosphate contacts are provided by residues 72-73 (YK), Arg-99, Lys-100, Lys-103, His-105, and 124-132 (DDVITAGTA). 2 residues coordinate orotate: Thr-128 and Arg-156.

Belongs to the purine/pyrimidine phosphoribosyltransferase family. PyrE subfamily. In terms of assembly, homodimer. Mg(2+) is required as a cofactor.

It catalyses the reaction orotidine 5'-phosphate + diphosphate = orotate + 5-phospho-alpha-D-ribose 1-diphosphate. It functions in the pathway pyrimidine metabolism; UMP biosynthesis via de novo pathway; UMP from orotate: step 1/2. Its function is as follows. Catalyzes the transfer of a ribosyl phosphate group from 5-phosphoribose 1-diphosphate to orotate, leading to the formation of orotidine monophosphate (OMP). The chain is Orotate phosphoribosyltransferase from Pseudomonas syringae pv. tomato (strain ATCC BAA-871 / DC3000).